The primary structure comprises 383 residues: Opsin Rh3 (383 aa).

Residues methionine 1–methionine 57 lie on the Extracellular side of the membrane. Residue asparagine 13 is glycosylated (N-linked (GlcNAc...) asparagine). The helical transmembrane segment at asparagine 58–valine 82 threads the bilayer. At phenylalanine 83–asparagine 94 the chain is on the cytoplasmic side. The helical transmembrane segment at isoleucine 95–phenylalanine 119 threads the bilayer. Residues histidine 120–phenylalanine 133 lie on the Extracellular side of the membrane. An intrachain disulfide couples cysteine 130 to cysteine 207. The helical transmembrane segment at glycine 134–tyrosine 153 threads the bilayer. Residues aspartate 154 to lysine 171 are Cytoplasmic-facing. The helical transmembrane segment at alanine 172–glycine 196 threads the bilayer. The Extracellular segment spans residues arginine 197–leucine 220. A helical transmembrane segment spans residues phenylalanine 221–valine 248. The Cytoplasmic portion of the chain corresponds to phenylalanine 249–lysine 284. A helical transmembrane segment spans residues alanine 285–alanine 308. Topologically, residues phenylalanine 309 to threonine 316 are extracellular. The chain crosses the membrane as a helical span at residues proline 317–serine 341. Lysine 328 carries the post-translational modification N6-(retinylidene)lysine. Topologically, residues histidine 342–alanine 383 are cytoplasmic. A disordered region spans residues alanine 362 to alanine 383. Residues alanine 369–alanine 383 are compositionally biased toward low complexity.

Belongs to the G-protein coupled receptor 1 family. Opsin subfamily. Phosphorylated on some or all of the serine and threonine residues present in the C-terminal region.

The protein resides in the membrane. Visual pigments are the light-absorbing molecules that mediate vision. They consist of an apoprotein, opsin, covalently linked to cis-retinal. This Drosophila melanogaster (Fruit fly) protein is Opsin Rh3 (Rh3).